A 206-amino-acid polypeptide reads, in one-letter code: Acidic proline-rich protein PRP33 (206 aa).

Residues M1–L13 form the signal peptide. The disordered stretch occupies residues S15–S206. Residues E55 to G71 are compositionally biased toward acidic residues. A run of 6 repeats spans residues P80–G97, P98–G115, P116–G133, P134–G152, P153–G170, and P171–D189. Positions P80 to D189 are 6 X 18 AA approximate tandem repeats. Residues G103–N112 are compositionally biased toward low complexity. Residues P113–Q174 show a composition bias toward pro residues.

It localises to the secreted. Functionally, may protect teeth by binding to tannins. In Rattus norvegicus (Rat), this protein is Acidic proline-rich protein PRP33 (Prpg1).